The chain runs to 212 residues: UPF0319 protein PBPRA2789 (212 aa).

The signal sequence occupies residues 1-21; sequence MKKILLAFTLPLVLASQTAMA.

It belongs to the UPF0319 family.

The sequence is that of UPF0319 protein PBPRA2789 from Photobacterium profundum (strain SS9).